A 317-amino-acid chain; its full sequence is tRNA dimethylallyltransferase (317 aa).

Residue 13–20 (GPTASGKS) participates in ATP binding. Substrate is bound at residue 15–20 (TASGKS).

It belongs to the IPP transferase family. In terms of assembly, monomer. Mg(2+) is required as a cofactor.

It catalyses the reaction adenosine(37) in tRNA + dimethylallyl diphosphate = N(6)-dimethylallyladenosine(37) in tRNA + diphosphate. Its function is as follows. Catalyzes the transfer of a dimethylallyl group onto the adenine at position 37 in tRNAs that read codons beginning with uridine, leading to the formation of N6-(dimethylallyl)adenosine (i(6)A). The sequence is that of tRNA dimethylallyltransferase from Kineococcus radiotolerans (strain ATCC BAA-149 / DSM 14245 / SRS30216).